Consider the following 474-residue polypeptide: Aspartyl/glutamyl-tRNA(Asn/Gln) amidotransferase subunit B (474 aa).

This sequence belongs to the GatB/GatE family. GatB subfamily. In terms of assembly, heterotrimer of A, B and C subunits.

It catalyses the reaction L-glutamyl-tRNA(Gln) + L-glutamine + ATP + H2O = L-glutaminyl-tRNA(Gln) + L-glutamate + ADP + phosphate + H(+). The catalysed reaction is L-aspartyl-tRNA(Asn) + L-glutamine + ATP + H2O = L-asparaginyl-tRNA(Asn) + L-glutamate + ADP + phosphate + 2 H(+). In terms of biological role, allows the formation of correctly charged Asn-tRNA(Asn) or Gln-tRNA(Gln) through the transamidation of misacylated Asp-tRNA(Asn) or Glu-tRNA(Gln) in organisms which lack either or both of asparaginyl-tRNA or glutaminyl-tRNA synthetases. The reaction takes place in the presence of glutamine and ATP through an activated phospho-Asp-tRNA(Asn) or phospho-Glu-tRNA(Gln). This Campylobacter curvus (strain 525.92) protein is Aspartyl/glutamyl-tRNA(Asn/Gln) amidotransferase subunit B.